Consider the following 197-residue polypeptide: Nucleoid occlusion factor SlmA (197 aa).

Residues 7-67 (INRREHILQC…GLIDFIEESL (61 aa)) enclose the HTH tetR-type domain. The H-T-H motif DNA-binding region spans 30-49 (TTAKLAAEVGVSEAALYRHF).

This sequence belongs to the nucleoid occlusion factor SlmA family. As to quaternary structure, homodimer. Interacts with FtsZ.

It is found in the cytoplasm. Its subcellular location is the nucleoid. Its function is as follows. Required for nucleoid occlusion (NO) phenomenon, which prevents Z-ring formation and cell division over the nucleoid. Acts as a DNA-associated cell division inhibitor that binds simultaneously chromosomal DNA and FtsZ, and disrupts the assembly of FtsZ polymers. SlmA-DNA-binding sequences (SBS) are dispersed on non-Ter regions of the chromosome, preventing FtsZ polymerization at these regions. The chain is Nucleoid occlusion factor SlmA from Shewanella loihica (strain ATCC BAA-1088 / PV-4).